The sequence spans 239 residues: Ribose-5-phosphate isomerase A (239 aa).

Substrate is bound by residues 40 to 43, 96 to 99, and 110 to 113; these read SGST, DGAD, and KGGG. The Proton acceptor role is filled by Glu119. Residue Lys137 coordinates substrate.

Belongs to the ribose 5-phosphate isomerase family. Homodimer.

The enzyme catalyses aldehydo-D-ribose 5-phosphate = D-ribulose 5-phosphate. The protein operates within carbohydrate degradation; pentose phosphate pathway; D-ribose 5-phosphate from D-ribulose 5-phosphate (non-oxidative stage): step 1/1. Functionally, catalyzes the reversible conversion of ribose-5-phosphate to ribulose 5-phosphate. This Methanococcus maripaludis (strain C6 / ATCC BAA-1332) protein is Ribose-5-phosphate isomerase A.